Consider the following 250-residue polypeptide: Probable transcriptional regulatory protein SCO1521 (250 aa).

It belongs to the TACO1 family.

It is found in the cytoplasm. This Streptomyces coelicolor (strain ATCC BAA-471 / A3(2) / M145) protein is Probable transcriptional regulatory protein SCO1521.